The following is a 491-amino-acid chain: Protein nucleotidyltransferase YdiU (491 aa).

Residues Gly-94, Gly-96, Arg-97, Lys-117, Asp-129, Gly-130, Arg-180, and Arg-187 each contribute to the ATP site. Asp-256 (proton acceptor) is an active-site residue. Positions 257 and 266 each coordinate Mg(2+). Residue Asp-266 participates in ATP binding.

It belongs to the SELO family. Requires Mg(2+) as cofactor. The cofactor is Mn(2+).

The catalysed reaction is L-seryl-[protein] + ATP = 3-O-(5'-adenylyl)-L-seryl-[protein] + diphosphate. The enzyme catalyses L-threonyl-[protein] + ATP = 3-O-(5'-adenylyl)-L-threonyl-[protein] + diphosphate. It carries out the reaction L-tyrosyl-[protein] + ATP = O-(5'-adenylyl)-L-tyrosyl-[protein] + diphosphate. It catalyses the reaction L-histidyl-[protein] + UTP = N(tele)-(5'-uridylyl)-L-histidyl-[protein] + diphosphate. The catalysed reaction is L-seryl-[protein] + UTP = O-(5'-uridylyl)-L-seryl-[protein] + diphosphate. The enzyme catalyses L-tyrosyl-[protein] + UTP = O-(5'-uridylyl)-L-tyrosyl-[protein] + diphosphate. Functionally, nucleotidyltransferase involved in the post-translational modification of proteins. It can catalyze the addition of adenosine monophosphate (AMP) or uridine monophosphate (UMP) to a protein, resulting in modifications known as AMPylation and UMPylation. This chain is Protein nucleotidyltransferase YdiU, found in Clostridium botulinum (strain Alaska E43 / Type E3).